Reading from the N-terminus, the 684-residue chain is Chaperone protein HtpG (684 aa).

The segment at 1 to 329 is a; substrate-binding; that stretch reads MSKKGTIGVT…SPDIPLNVSR (329 aa). The interval 330 to 548 is b; that stretch reads SYLQSDANVK…FMRRMRDMAQ (219 aa). Residues 549-684 form a c region; it reads LQPGMSFYGE…EFIRRSQRLL (136 aa).

The protein belongs to the heat shock protein 90 family. In terms of assembly, homodimer.

It localises to the cytoplasm. Molecular chaperone. Has ATPase activity. The chain is Chaperone protein HtpG from Porphyromonas gingivalis (strain ATCC 33277 / DSM 20709 / CIP 103683 / JCM 12257 / NCTC 11834 / 2561).